We begin with the raw amino-acid sequence, 304 residues long: Endonuclease III-like protein 1 (304 aa).

Residues 1–22 (MTALSARMLTRSRSLGPGAGPR) constitute a mitochondrion transit peptide. A disordered region spans residues 1 to 72 (MTALSARMLT…SDSEKGEGAE (72 aa)). Basic and acidic residues predominate over residues 23–42 (GCREEPGPLRRREAAAEARK). Residues 28-52 (PGPLRRREAAAEARKSHSPVKRPRK) carry the Bipartite nuclear localization signal motif. Residues 43–55 (SHSPVKRPRKAQR) show a composition bias toward basic residues. 2 positions are modified to phosphoserine: S63 and S65. A HhH domain is found at 191-215 (HYGGDIPASVAELVALPGVGPKMAH). K212 acts as the Nucleophile; for N-glycosylase activity in catalysis. [4Fe-4S] cluster is bound by residues C282, C289, C292, and C298.

This sequence belongs to the Nth/MutY family. In terms of assembly, interacts with YBX1. Interacts with ERCC5/XPG; the interaction stimulates NTHL1 activity and NTHL1 binding to its DNA substrate. Requires [4Fe-4S] cluster as cofactor. Ubiquitinated by TRIM26; leading to proteasomal degradation. Widely expressed with highest levels in heart and lowest levels in lung and liver.

The protein localises to the nucleus. Its subcellular location is the mitochondrion. It catalyses the reaction 2'-deoxyribonucleotide-(2'-deoxyribose 5'-phosphate)-2'-deoxyribonucleotide-DNA = a 3'-end 2'-deoxyribonucleotide-(2,3-dehydro-2,3-deoxyribose 5'-phosphate)-DNA + a 5'-end 5'-phospho-2'-deoxyribonucleoside-DNA + H(+). With respect to regulation, APE1 displaces NTHL1 from the N-glycosylase-generated AP site in DNA, thereby increasing the turnover of the DNA N-glycosylase activity. AP lyase activity is stimulated by YBX1. ERCC5/XPG stimulates NTHL1 activity and NTHL1 binding to its DNA substrate. Its function is as follows. Bifunctional DNA N-glycosylase with associated apurinic/apyrimidinic (AP) lyase function that catalyzes the first step in base excision repair (BER), the primary repair pathway for the repair of oxidative DNA damage. The DNA N-glycosylase activity releases the damaged DNA base from DNA by cleaving the N-glycosidic bond, leaving an AP site. The AP-lyase activity cleaves the phosphodiester bond 3' to the AP site by a beta-elimination. Primarily recognizes and repairs oxidative base damage of pyrimidines. Also has 8-oxo-7,8-dihydroguanine (8-oxoG) DNA glycosylase activity. Acts preferentially on DNA damage opposite guanine residues in DNA. Is able to process lesions in nucleosomes without requiring or inducing nucleosome disruption. This is Endonuclease III-like protein 1 from Homo sapiens (Human).